The following is a 180-amino-acid chain: Translation initiation factor IF-3 (180 aa).

Belongs to the IF-3 family. Monomer.

The protein localises to the cytoplasm. Its function is as follows. IF-3 binds to the 30S ribosomal subunit and shifts the equilibrium between 70S ribosomes and their 50S and 30S subunits in favor of the free subunits, thus enhancing the availability of 30S subunits on which protein synthesis initiation begins. The chain is Translation initiation factor IF-3 from Salmonella typhimurium (strain LT2 / SGSC1412 / ATCC 700720).